Consider the following 420-residue polypeptide: Imidazolonepropionase (420 aa).

Positions 77 and 79 each coordinate Fe(3+). Residues H77 and H79 each contribute to the Zn(2+) site. Residues R86, Y149, and H182 each contribute to the 4-imidazolone-5-propanoate site. Y149 serves as a coordination point for N-formimidoyl-L-glutamate. H245 serves as a coordination point for Fe(3+). Residue H245 participates in Zn(2+) binding. E248 provides a ligand contact to 4-imidazolone-5-propanoate. D319 contributes to the Fe(3+) binding site. Position 319 (D319) interacts with Zn(2+). Residue N321 participates in N-formimidoyl-L-glutamate binding.

This sequence belongs to the metallo-dependent hydrolases superfamily. HutI family. It depends on Zn(2+) as a cofactor. Fe(3+) serves as cofactor.

The protein resides in the cytoplasm. It carries out the reaction 4-imidazolone-5-propanoate + H2O = N-formimidoyl-L-glutamate. It functions in the pathway amino-acid degradation; L-histidine degradation into L-glutamate; N-formimidoyl-L-glutamate from L-histidine: step 3/3. Its function is as follows. Catalyzes the hydrolytic cleavage of the carbon-nitrogen bond in imidazolone-5-propanoate to yield N-formimidoyl-L-glutamate. It is the third step in the universal histidine degradation pathway. The chain is Imidazolonepropionase from Haloarcula marismortui (strain ATCC 43049 / DSM 3752 / JCM 8966 / VKM B-1809) (Halobacterium marismortui).